The primary structure comprises 1742 residues: Meiosis regulator and mRNA stability factor 1 (1742 aa).

Residue Ser-65 is modified to Phosphoserine. The region spanning 351–488 (IGVFWDIENC…ALLHHANELI (138 aa)) is the NYN domain. Disordered stretches follow at residues 620–642 (PSSA…TRNA) and 655–721 (SKTG…KEKE). The segment covering 631-642 (SQANSGSATRNA) has biased composition (polar residues). Low complexity predominate over residues 673–689 (APPHRSSSAAAPAPKAP). The residue at position 696 (Tyr-696) is a Phosphotyrosine. At Ser-757 the chain carries Phosphoserine. Positions 788 to 867 (VDVQISNLDY…KKILVSLATG (80 aa)) constitute an RRM domain. HTH OST-type domains are found at residues 872-946 (SLSL…SPLG) and 1000-1077 (SLKT…HNKP). Ser-1089 and Ser-1091 each carry phosphoserine. HTH OST-type domains are found at residues 1097 to 1171 (QLIQ…LTHR), 1173 to 1247 (QVKR…CIPR), 1257 to 1332 (RTKQ…TEVE), 1333 to 1408 (RFKA…INRK), 1409 to 1484 (SLRA…CVKL), and 1486 to 1560 (SLYL…LKND). Ser-1571 bears the Phosphoserine mark. Residues 1678 to 1729 (IRNENLPPDPSSPGVSAAVPAPPSPSSETPESLLSKDPTESPAKKQPKNRVK) form a disordered region. A compositionally biased stretch (low complexity) spans 1703-1712 (SSETPESLLS).

Interacts with LIMK2.

It localises to the peroxisome. Its function is as follows. Essential regulator of oogenesis required for female meiotic progression to repress transposable elements and preventing their mobilization, which is essential for the germline integrity. Probably acts via some RNA metabolic process, equivalent to the piRNA system in males, which mediates the repression of transposable elements during meiosis by forming complexes composed of RNAs and governs the methylation and subsequent repression of transposons. Also required to protect from DNA double-strand breaks. The chain is Meiosis regulator and mRNA stability factor 1 from Bos taurus (Bovine).